Reading from the N-terminus, the 299-residue chain is Phosphoribosylaminoimidazole-succinocarboxamide synthase (299 aa).

It belongs to the SAICAR synthetase family.

It carries out the reaction 5-amino-1-(5-phospho-D-ribosyl)imidazole-4-carboxylate + L-aspartate + ATP = (2S)-2-[5-amino-1-(5-phospho-beta-D-ribosyl)imidazole-4-carboxamido]succinate + ADP + phosphate + 2 H(+). Its pathway is purine metabolism; IMP biosynthesis via de novo pathway; 5-amino-1-(5-phospho-D-ribosyl)imidazole-4-carboxamide from 5-amino-1-(5-phospho-D-ribosyl)imidazole-4-carboxylate: step 1/2. This is Phosphoribosylaminoimidazole-succinocarboxamide synthase from Desulfatibacillum aliphaticivorans.